An 887-amino-acid chain; its full sequence is Bifunctional uridylyltransferase/uridylyl-removing enzyme (887 aa).

The segment at 1-337 (MINTSPLLNY…RLPNYERKIE (337 aa)) is uridylyltransferase. Residues 339–699 (VNDHFKIVDN…AHRKAAQDAV (361 aa)) form a uridylyl-removing region. The region spanning 457–579 (VDAHTLLLLR…LGDMEHLDYL (123 aa)) is the HD domain. ACT domains are found at residues 700–782 (QIFI…LMQR) and 809–887 (MVEI…ICQH).

This sequence belongs to the GlnD family. The cofactor is Mg(2+).

It carries out the reaction [protein-PII]-L-tyrosine + UTP = [protein-PII]-uridylyl-L-tyrosine + diphosphate. It catalyses the reaction [protein-PII]-uridylyl-L-tyrosine + H2O = [protein-PII]-L-tyrosine + UMP + H(+). Uridylyltransferase (UTase) activity is inhibited by glutamine, while glutamine activates uridylyl-removing (UR) activity. Its function is as follows. Modifies, by uridylylation and deuridylylation, the PII regulatory proteins (GlnB and homologs), in response to the nitrogen status of the cell that GlnD senses through the glutamine level. Under low glutamine levels, catalyzes the conversion of the PII proteins and UTP to PII-UMP and PPi, while under higher glutamine levels, GlnD hydrolyzes PII-UMP to PII and UMP (deuridylylation). Thus, controls uridylylation state and activity of the PII proteins, and plays an important role in the regulation of nitrogen assimilation and metabolism. In Acinetobacter baumannii (strain AB307-0294), this protein is Bifunctional uridylyltransferase/uridylyl-removing enzyme.